The following is a 255-amino-acid chain: Small ribosomal subunit protein eS1 (255 aa).

At Ala2 the chain carries N-acetylalanine; partial.

It belongs to the eukaryotic ribosomal protein eS1 family. Component of the small ribosomal subunit. Mature ribosomes consist of a small (40S) and a large (60S) subunit. The 40S subunit contains about 33 different proteins and 1 molecule of RNA (18S). The 60S subunit contains about 49 different proteins and 3 molecules of RNA (25S, 5.8S and 5S).

Its subcellular location is the cytoplasm. This Candida glabrata (strain ATCC 2001 / BCRC 20586 / JCM 3761 / NBRC 0622 / NRRL Y-65 / CBS 138) (Yeast) protein is Small ribosomal subunit protein eS1.